A 484-amino-acid chain; its full sequence is Ferrochelatase-2, chloroplastic (484 aa).

This sequence belongs to the ferrochelatase family.

The protein localises to the plastid. The protein resides in the chloroplast. It carries out the reaction heme b + 2 H(+) = protoporphyrin IX + Fe(2+). Its pathway is porphyrin-containing compound metabolism; protoheme biosynthesis; protoheme from protoporphyrin-IX: step 1/1. Its function is as follows. Catalyzes the ferrous insertion into protoporphyrin IX. In Hordeum vulgare (Barley), this protein is Ferrochelatase-2, chloroplastic (HEMH).